Consider the following 363-residue polypeptide: Holliday junction branch migration complex subunit RuvB (363 aa).

Positions 1 to 44 are disordered; the sequence is MAIKRNQGHGLPPKRDPALGRDALTTSQALPEDQEQSANEDRIR. The segment at 13–204 is large ATPase domain (RuvB-L); sequence PKRDPALGRD…FGLIQRLRFY (192 aa). ATP-binding residues include I43, R44, G85, K88, T89, T90, R194, Y204, and R241. T89 serves as a coordination point for Mg(2+). The small ATPAse domain (RuvB-S) stretch occupies residues 205-275; the sequence is EVDELIAIVH…VAATALDLYN (71 aa). The head domain (RuvB-H) stretch occupies residues 278–363; that stretch reads ALGLDWTDRL…EQSTQLDFLP (86 aa). Positions 333 and 338 each coordinate DNA.

It belongs to the RuvB family. In terms of assembly, homohexamer. Forms an RuvA(8)-RuvB(12)-Holliday junction (HJ) complex. HJ DNA is sandwiched between 2 RuvA tetramers; dsDNA enters through RuvA and exits via RuvB. An RuvB hexamer assembles on each DNA strand where it exits the tetramer. Each RuvB hexamer is contacted by two RuvA subunits (via domain III) on 2 adjacent RuvB subunits; this complex drives branch migration. In the full resolvosome a probable DNA-RuvA(4)-RuvB(12)-RuvC(2) complex forms which resolves the HJ.

The protein localises to the cytoplasm. The catalysed reaction is ATP + H2O = ADP + phosphate + H(+). In terms of biological role, the RuvA-RuvB-RuvC complex processes Holliday junction (HJ) DNA during genetic recombination and DNA repair, while the RuvA-RuvB complex plays an important role in the rescue of blocked DNA replication forks via replication fork reversal (RFR). RuvA specifically binds to HJ cruciform DNA, conferring on it an open structure. The RuvB hexamer acts as an ATP-dependent pump, pulling dsDNA into and through the RuvAB complex. RuvB forms 2 homohexamers on either side of HJ DNA bound by 1 or 2 RuvA tetramers; 4 subunits per hexamer contact DNA at a time. Coordinated motions by a converter formed by DNA-disengaged RuvB subunits stimulates ATP hydrolysis and nucleotide exchange. Immobilization of the converter enables RuvB to convert the ATP-contained energy into a lever motion, pulling 2 nucleotides of DNA out of the RuvA tetramer per ATP hydrolyzed, thus driving DNA branch migration. The RuvB motors rotate together with the DNA substrate, which together with the progressing nucleotide cycle form the mechanistic basis for DNA recombination by continuous HJ branch migration. Branch migration allows RuvC to scan DNA until it finds its consensus sequence, where it cleaves and resolves cruciform DNA. This Picosynechococcus sp. (strain ATCC 27264 / PCC 7002 / PR-6) (Agmenellum quadruplicatum) protein is Holliday junction branch migration complex subunit RuvB.